A 210-amino-acid chain; its full sequence is Uracil phosphoribosyltransferase (210 aa).

Residues Arg-78, Arg-103, and 130-138 (DPMLATGGT) contribute to the 5-phospho-alpha-D-ribose 1-diphosphate site. Uracil-binding positions include Ile-193 and 198–200 (GDA). Asp-199 contacts 5-phospho-alpha-D-ribose 1-diphosphate.

The protein belongs to the UPRTase family. Mg(2+) is required as a cofactor.

It carries out the reaction UMP + diphosphate = 5-phospho-alpha-D-ribose 1-diphosphate + uracil. Its pathway is pyrimidine metabolism; UMP biosynthesis via salvage pathway; UMP from uracil: step 1/1. Allosterically activated by GTP. Its function is as follows. Catalyzes the conversion of uracil and 5-phospho-alpha-D-ribose 1-diphosphate (PRPP) to UMP and diphosphate. The chain is Uracil phosphoribosyltransferase from Xanthomonas campestris pv. campestris (strain 8004).